The primary structure comprises 566 residues: Alpha-N-acetylgalactosaminide alpha-2,6-sialyltransferase 1 (566 aa).

At 1–16 (MGFLIRRLPKDSRIFR) the chain is on the cytoplasmic side. A helical; Signal-anchor for type II membrane protein transmembrane segment spans residues 17–37 (WLLILTVFSFIITSFSALFGM). Topologically, residues 38 to 566 (EKSIFRQLKI…ENIMKLYQRS (529 aa)) are lumenal. N-linked (GlcNAc...) asparagine glycans are attached at residues Asn66 and Asn132. The tract at residues 138–161 (ASVVERTKEKTTARPVPGVGEADG) is disordered. The N-linked (GlcNAc...) asparagine glycan is linked to Asn192. Residues 247–254 (SSSPVSTC) form repeat 1. Residues 247 to 337 (SSSPVSTCSE…ANSSSNVSTC (91 aa)) are 2 X 8 AA repeats of S-S-S-X-V-S-T-C. 2 cysteine pairs are disulfide-bonded: Cys254/Cys337 and Cys340/Cys508. N-linked (GlcNAc...) asparagine glycans are attached at residues Asn275, Asn286, Asn306, Asn329, and Asn333. The stretch at 330–337 (SSSNVSTC) is repeat 2.

The protein belongs to the glycosyltransferase 29 family. Heart, kidney, testes, brain, liver and lung.

The protein resides in the golgi apparatus membrane. The enzyme catalyses a beta-D-galactosyl-(1-&gt;3)-N-acetyl-alpha-D-galactosaminyl derivative + CMP-N-acetyl-beta-neuraminate = a beta-D-galactosyl-(1-&gt;3)-[N-acetyl-alpha-neuraminyl-(2-&gt;6)]-N-acetyl-alpha-D-galactosaminyl derivative + CMP + H(+). The catalysed reaction is a 3-O-[N-acetyl-alpha-D-galactosaminyl]-L-seryl-[protein] + CMP-N-acetyl-beta-neuraminate = a 3-O-[N-acetyl-alpha-neuraminosyl-(2-&gt;6)-N-acetyl-alpha-D-galactosaminyl]-L-seryl-[protein] + CMP + H(+). It catalyses the reaction a 3-O-[N-acetyl-alpha-D-galactosaminyl]-L-threonyl-[protein] + CMP-N-acetyl-beta-neuraminate = a 3-O-[N-acetyl-alpha-neuraminosyl-(2-&gt;6)-N-acetyl-alpha-D-galactosaminyl]-L-threonyl-[protein] + CMP + H(+). It carries out the reaction a 3-O-[beta-D-galactosyl-(1-&gt;3)-N-acetyl-alpha-D-galactosaminyl]-L-seryl-[protein] + CMP-N-acetyl-beta-neuraminate = a 3-O-{beta-D-galactosyl-(1-&gt;3)-[N-acetyl-alpha-neuraminosyl-(2-&gt;6)]-N-acetyl-alpha-D-galactosaminyl}-L-seryl-[protein] + CMP + H(+). The enzyme catalyses a 3-O-[beta-D-galactosyl-(1-&gt;3)-N-acetyl-alpha-D-galactosaminyl]-L-threonyl-[protein] + CMP-N-acetyl-beta-neuraminate = a 3-O-{beta-D-galactosyl-(1-&gt;3)-[N-acetyl-alpha-neuraminosyl-(2-&gt;6)]-N-acetyl-alpha-D-galactosaminyl}-L-threonyl-[protein] + CMP + H(+). The catalysed reaction is a 3-O-[N-acetyl-alpha-neuraminyl-(2-&gt;3)-beta-D-galactosyl-(1-&gt;3)-N-acetyl-alpha-D-galactosaminyl]-L-threonyl-[protein] + CMP-N-acetyl-beta-neuraminate = a 3-O-{alpha-Neu5Ac-(2-&gt;3)-beta-D-Gal-(1-&gt;3)-[alpha-Neu5Ac-(2-&gt;6)]-alpha-D-GalNAc}-L-threonyl-[protein] + CMP + H(+). The protein operates within protein modification; protein glycosylation. In terms of biological role, protein sialyltransferase specifically expressed in goblet cells that plays a key role in intestinal host-commensal homeostasis. Conjugates sialic acid with an alpha-2-6 linkage to N-acetylgalactosamine (GalNAc) glycan chains linked to serine or threonine in glycoproteins. Generates sialylated T and Tn antigens.. This chain is Alpha-N-acetylgalactosaminide alpha-2,6-sialyltransferase 1 (ST6GALNAC1), found in Gallus gallus (Chicken).